The following is a 327-amino-acid chain: Annexin A8 (327 aa).

4 Annexin repeats span residues 21–92 (FNPD…ALMY), 93–164 (PPYR…CLLQ), 177–249 (GLAL…TVVK), and 253–324 (NLHG…NLVG). 4 residues coordinate Ca(2+): M266, G268, G270, and D310.

It belongs to the annexin family.

Functionally, this protein is an anticoagulant protein that acts as an indirect inhibitor of the thromboplastin-specific complex, which is involved in the blood coagulation cascade. This chain is Annexin A8 (ANXA8), found in Bos taurus (Bovine).